Here is a 362-residue protein sequence, read N- to C-terminus: Anthranilate phosphoribosyltransferase (362 aa).

Residues Gly-96, 99-100, Thr-104, 106-109, 124-132, and Gly-136 each bind 5-phospho-alpha-D-ribose 1-diphosphate; these read GD, NIST, and KHGNRAASS. Gly-96 lines the anthranilate pocket. Residue Ser-108 participates in Mg(2+) binding. Residue Asn-127 participates in anthranilate binding. Position 182 (Arg-182) interacts with anthranilate. 2 residues coordinate Mg(2+): Asp-240 and Glu-241.

It belongs to the anthranilate phosphoribosyltransferase family. In terms of assembly, homodimer. Mg(2+) is required as a cofactor.

It catalyses the reaction N-(5-phospho-beta-D-ribosyl)anthranilate + diphosphate = 5-phospho-alpha-D-ribose 1-diphosphate + anthranilate. It functions in the pathway amino-acid biosynthesis; L-tryptophan biosynthesis; L-tryptophan from chorismate: step 2/5. In terms of biological role, catalyzes the transfer of the phosphoribosyl group of 5-phosphorylribose-1-pyrophosphate (PRPP) to anthranilate to yield N-(5'-phosphoribosyl)-anthranilate (PRA). The sequence is that of Anthranilate phosphoribosyltransferase from Rhodococcus jostii (strain RHA1).